The chain runs to 22 residues: Antimicrobial peptide 4 (22 aa).

As to expression, expressed by the skin glands.

The protein localises to the secreted. Its function is as follows. Has very strong antimicrobial activity against Gram-positive bacterium S.aureus and yeast C.albicans, and very weak activity against Gram-negative bacterium E.coli. Has strong hemolytic activity against human red blood cells. The chain is Antimicrobial peptide 4 from Xenopus tropicalis (Western clawed frog).